Reading from the N-terminus, the 218-residue chain is Cell division protein SepF (218 aa).

The segment at 20 to 81 is disordered; the sequence is DDEYYDDRAP…GYRGGYADEP (62 aa). The span at 36–65 shows a compositional bias: basic and acidic residues; it reads PRFDDDYGRYDGRDYDDARSDSRGDLRGEP.

Belongs to the SepF family. Homodimer. Interacts with FtsZ.

The protein resides in the cytoplasm. Functionally, cell division protein that is part of the divisome complex and is recruited early to the Z-ring. Probably stimulates Z-ring formation, perhaps through the cross-linking of FtsZ protofilaments. Its function overlaps with FtsA. The chain is Cell division protein SepF from Mycobacterium bovis (strain ATCC BAA-935 / AF2122/97).